An 880-amino-acid chain; its full sequence is Endoglucanase E-4 (880 aa).

The N-terminal stretch at 1–46 is a signal peptide; the sequence is MSVTEPPPRRRGRHSRARRFLTSLGATAALTAGMLGVPLATGTAHA. Residue Asp-104 is the Nucleophile of the active site. Catalysis depends on residues His-422, His-427, Asp-461, and Glu-470. The 149-residue stretch at 504 to 652 folds into the CBM3 domain; the sequence is PDGPEIFVEA…GVPVWGTAPE (149 aa). The disordered stretch occupies residues 647–688; it reads WGTAPEEGEEPGGGEGPGGGEEPGEDVTPPSAPGSPAVRDVT. One can recognise a Fibronectin type-III domain in the interval 678–770; sequence APGSPAVRDV…TVSFTTLAEN (93 aa). One can recognise a CBM2 domain in the interval 771–880; it reads GGGPDASCTV…TLNGEPCALA (110 aa).

Belongs to the glycosyl hydrolase 9 (cellulase E) family.

It carries out the reaction Endohydrolysis of (1-&gt;4)-beta-D-glucosidic linkages in cellulose, lichenin and cereal beta-D-glucans.. It participates in glycan metabolism; cellulose degradation. In Thermobifida fusca (Thermomonospora fusca), this protein is Endoglucanase E-4 (celD).